The primary structure comprises 201 residues: Holliday junction branch migration complex subunit RuvA (201 aa).

Residues 1-64 (MIGRLHGKII…EDAHLLFGFA (64 aa)) form a domain I region. A domain II region spans residues 65–143 (QKQDRTLFRE…GVAQSDFFEE (79 aa)). Residues 144–154 (HSVETIVATHS) are flexible linker. The domain III stretch occupies residues 154–201 (SHDPADEARDALVALGYKLADAEKMIKKVNKAGATSEQLIREALKASL).

The protein belongs to the RuvA family. Homotetramer. Forms an RuvA(8)-RuvB(12)-Holliday junction (HJ) complex. HJ DNA is sandwiched between 2 RuvA tetramers; dsDNA enters through RuvA and exits via RuvB. An RuvB hexamer assembles on each DNA strand where it exits the tetramer. Each RuvB hexamer is contacted by two RuvA subunits (via domain III) on 2 adjacent RuvB subunits; this complex drives branch migration. In the full resolvosome a probable DNA-RuvA(4)-RuvB(12)-RuvC(2) complex forms which resolves the HJ.

It localises to the cytoplasm. Its function is as follows. The RuvA-RuvB-RuvC complex processes Holliday junction (HJ) DNA during genetic recombination and DNA repair, while the RuvA-RuvB complex plays an important role in the rescue of blocked DNA replication forks via replication fork reversal (RFR). RuvA specifically binds to HJ cruciform DNA, conferring on it an open structure. The RuvB hexamer acts as an ATP-dependent pump, pulling dsDNA into and through the RuvAB complex. HJ branch migration allows RuvC to scan DNA until it finds its consensus sequence, where it cleaves and resolves the cruciform DNA. This Actinobacillus pleuropneumoniae serotype 7 (strain AP76) protein is Holliday junction branch migration complex subunit RuvA.